Consider the following 326-residue polypeptide: 4-hydroxythreonine-4-phosphate dehydrogenase (326 aa).

Residues histidine 134 and threonine 135 each coordinate substrate. Residues histidine 164, histidine 209, and histidine 264 each coordinate a divalent metal cation. Substrate contacts are provided by lysine 272, asparagine 281, and arginine 290.

It belongs to the PdxA family. As to quaternary structure, homodimer. Requires Zn(2+) as cofactor. Mg(2+) is required as a cofactor. Co(2+) serves as cofactor.

The protein resides in the cytoplasm. The enzyme catalyses 4-(phosphooxy)-L-threonine + NAD(+) = 3-amino-2-oxopropyl phosphate + CO2 + NADH. It functions in the pathway cofactor biosynthesis; pyridoxine 5'-phosphate biosynthesis; pyridoxine 5'-phosphate from D-erythrose 4-phosphate: step 4/5. In terms of biological role, catalyzes the NAD(P)-dependent oxidation of 4-(phosphooxy)-L-threonine (HTP) into 2-amino-3-oxo-4-(phosphooxy)butyric acid which spontaneously decarboxylates to form 3-amino-2-oxopropyl phosphate (AHAP). This is 4-hydroxythreonine-4-phosphate dehydrogenase from Colwellia psychrerythraea (strain 34H / ATCC BAA-681) (Vibrio psychroerythus).